We begin with the raw amino-acid sequence, 1279 residues long: ATP-dependent helicase/nuclease subunit A (1279 aa).

One can recognise a UvrD-like helicase ATP-binding domain in the interval 4–499 (TKWTDEQRQA…VKLFKNFRSR (496 aa)). Residue 25–32 (AGAGAGKT) participates in ATP binding. The UvrD-like helicase C-terminal domain occupies 526-853 (EEALKVGASY…RIMSIHKSKG (328 aa)).

The protein belongs to the helicase family. AddA subfamily. Heterodimer of AddA and AddB/RexB. It depends on Mg(2+) as a cofactor.

It carries out the reaction Couples ATP hydrolysis with the unwinding of duplex DNA by translocating in the 3'-5' direction.. The catalysed reaction is ATP + H2O = ADP + phosphate + H(+). Functionally, the heterodimer acts as both an ATP-dependent DNA helicase and an ATP-dependent, dual-direction single-stranded exonuclease. Recognizes the chi site generating a DNA molecule suitable for the initiation of homologous recombination. The AddA nuclease domain is required for chi fragment generation; this subunit has the helicase and 3' -&gt; 5' nuclease activities. This is ATP-dependent helicase/nuclease subunit A from Clostridium botulinum (strain Langeland / NCTC 10281 / Type F).